Here is a 144-residue protein sequence, read N- to C-terminus: Large ribosomal subunit protein uL15 (144 aa).

Residues 1-56 (MELNNLKPAAGAKHAKRRVGRGIGSGLGKTAGRGHKGQKSRSGGFHKVGFEGGQMP) are disordered. A compositionally biased stretch (gly residues) spans 21-31 (RGIGSGLGKTA).

Belongs to the universal ribosomal protein uL15 family. Part of the 50S ribosomal subunit.

In terms of biological role, binds to the 23S rRNA. The sequence is that of Large ribosomal subunit protein uL15 from Burkholderia ambifaria (strain MC40-6).